The primary structure comprises 41 residues: Large ribosomal subunit protein bL36 (41 aa).

This sequence belongs to the bacterial ribosomal protein bL36 family.

This Xanthobacter autotrophicus (strain ATCC BAA-1158 / Py2) protein is Large ribosomal subunit protein bL36.